The following is an 835-amino-acid chain: Probable RNA-directed RNA polymerase (835 aa).

This sequence belongs to the totiviridae RNA-directed RNA polymerase family.

It catalyses the reaction RNA(n) + a ribonucleoside 5'-triphosphate = RNA(n+1) + diphosphate. RNA-dependent RNA polymerase which replicates the viral genome. Catalyzes the transcription of fully conservative plus-strand genomic RNAs that are extruded from the virion into the cytoplasm where they function as mRNAs for translation of viral proteins and also as substrates for encapsidation to form new virions. Once encapsidated, the positive strand is converted to dsRNA by the RNA-directed RNA polymerase. This is Probable RNA-directed RNA polymerase from Helminthosporium victoriae virus-190S (Hv190SV).